The following is a 132-amino-acid chain: uncharacterized protein (132 aa).

3 helical membrane passes run 19–39 (FTWI…FIFL), 58–78 (IGLR…VAVM), and 93–113 (LIAY…CAAL).

The protein belongs to the bacteriophage holin family. Cp-1 holin subfamily.

Its subcellular location is the cell membrane. This is an uncharacterized protein from Clostridium perfringens.